The following is a 456-amino-acid chain: Glycerol-3-phosphate acyltransferase 4 (456 aa).

A signal peptide spans M1–G37. Helical transmembrane passes span I156–L176 and I180–L200. An N-linked (GlcNAc...) asparagine glycan is attached at N247. Residues H248–D253 carry the HXXXXD motif motif. Residues N327, N328, and N362 are each glycosylated (N-linked (GlcNAc...) asparagine).

The protein belongs to the 1-acyl-sn-glycerol-3-phosphate acyltransferase family.

The protein localises to the endoplasmic reticulum membrane. The catalysed reaction is sn-glycerol 3-phosphate + an acyl-CoA = a 1-acyl-sn-glycero-3-phosphate + CoA. It carries out the reaction dodecanoyl-CoA + sn-glycerol 3-phosphate = 1-dodecanoyl-sn-glycerol 3-phosphate + CoA. The enzyme catalyses sn-glycerol 3-phosphate + hexadecanoyl-CoA = 1-hexadecanoyl-sn-glycero-3-phosphate + CoA. It catalyses the reaction sn-glycerol 3-phosphate + octadecanoyl-CoA = 1-octadecanoyl-sn-glycero-3-phosphate + CoA. The catalysed reaction is sn-glycerol 3-phosphate + (9Z)-octadecenoyl-CoA = 1-(9Z-octadecenoyl)-sn-glycero-3-phosphate + CoA. It carries out the reaction (9Z,12Z)-octadecadienoyl-CoA + sn-glycerol 3-phosphate = 1-(9Z,12Z)-octadecadienoyl-sn-glycero-3-phosphate + CoA. It participates in phospholipid metabolism; CDP-diacylglycerol biosynthesis; CDP-diacylglycerol from sn-glycerol 3-phosphate: step 1/3. Converts glycerol-3-phosphate to 1-acyl-sn-glycerol-3-phosphate (lysophosphatidic acid or LPA) by incorporating an acyl moiety at the sn-1 position of the glycerol backbone. Active against both saturated and unsaturated long-chain fatty acyl-CoAs. Protects cells against lipotoxicity. This Pongo abelii (Sumatran orangutan) protein is Glycerol-3-phosphate acyltransferase 4.